The following is a 186-amino-acid chain: Elongation factor P (186 aa).

The protein belongs to the elongation factor P family.

It is found in the cytoplasm. The protein operates within protein biosynthesis; polypeptide chain elongation. Involved in peptide bond synthesis. Stimulates efficient translation and peptide-bond synthesis on native or reconstituted 70S ribosomes in vitro. Probably functions indirectly by altering the affinity of the ribosome for aminoacyl-tRNA, thus increasing their reactivity as acceptors for peptidyl transferase. The sequence is that of Elongation factor P from Cupriavidus pinatubonensis (strain JMP 134 / LMG 1197) (Cupriavidus necator (strain JMP 134)).